We begin with the raw amino-acid sequence, 130 residues long: Large ribosomal subunit protein bL21 (130 aa).

Residues 110–130 (KTAAQPAADEAVAANEVDSEA) form a disordered region. Residues 112 to 130 (AAQPAADEAVAANEVDSEA) show a composition bias toward low complexity.

This sequence belongs to the bacterial ribosomal protein bL21 family. Part of the 50S ribosomal subunit. Contacts protein L20.

Functionally, this protein binds to 23S rRNA in the presence of protein L20. The sequence is that of Large ribosomal subunit protein bL21 from Cyanothece sp. (strain PCC 7425 / ATCC 29141).